We begin with the raw amino-acid sequence, 208 residues long: Translation initiation factor 2 subunit beta (208 aa).

Residues 144 to 202 form the TRAM domain; it reads GIEEGKEYTVEISEVGSSGEGRASFRGFTIFVPGTKKGETVKVKIKKIKNDVAIAEVVS.

This sequence belongs to the eIF-2-beta/eIF-5 family. Heterotrimer composed of an alpha, a beta and a gamma chain.

EIF-2 functions in the early steps of protein synthesis by forming a ternary complex with GTP and initiator tRNA. This chain is Translation initiation factor 2 subunit beta (eif2b), found in Thermoplasma volcanium (strain ATCC 51530 / DSM 4299 / JCM 9571 / NBRC 15438 / GSS1).